The chain runs to 89 residues: DNA/RNA-binding protein Alba (89 aa).

The protein belongs to the histone-like Alba family.

The protein resides in the cytoplasm. It localises to the chromosome. Binds double-stranded DNA tightly but without sequence specificity. Involved in DNA compaction. The protein is DNA/RNA-binding protein Alba of Methanococcus maripaludis (strain DSM 14266 / JCM 13030 / NBRC 101832 / S2 / LL).